We begin with the raw amino-acid sequence, 2378 residues long: Serine/threonine-protein kinase ATM (2378 aa).

Residues 1415 to 1937 (LSARKRNTMM…LHTILMYDDE (523 aa)) form the FAT domain. The PI3K/PI4K catalytic domain occupies 2044-2366 (WKDVFTIADG…LLREATSADN (323 aa)). The tract at residues 2050–2056 (IADGIST) is G-loop. The catalytic loop stretch occupies residues 2218–2226 (GLGDRHASN). The tract at residues 2238 to 2263 (HIDLGMILEYSKRTLPVPEQVPFRIT) is activation loop. The FATC domain occupies 2346–2378 (TAQSSNLQIRRLLREATSADNLSRMFCGWMPFL).

The protein belongs to the PI3/PI4-kinase family. ATM subfamily.

It localises to the nucleus. It carries out the reaction L-seryl-[protein] + ATP = O-phospho-L-seryl-[protein] + ADP + H(+). It catalyses the reaction L-threonyl-[protein] + ATP = O-phospho-L-threonyl-[protein] + ADP + H(+). Serine/threonine protein kinase which activates checkpoint signaling in the presence of DNA double strand breaks (DSBs) and other forms of DNA damage induced by ionizing radiation and other genotoxic stresses such as UV. Plays a role in maintaining genome stability. In Caenorhabditis elegans, this protein is Serine/threonine-protein kinase ATM (atm-1).